Here is a 150-residue protein sequence, read N- to C-terminus: Large ribosomal subunit protein bL9 (150 aa).

Belongs to the bacterial ribosomal protein bL9 family.

Functionally, binds to the 23S rRNA. The polypeptide is Large ribosomal subunit protein bL9 (Streptococcus pyogenes serotype M2 (strain MGAS10270)).